A 315-amino-acid chain; its full sequence is Mitochondrial outer membrane import complex protein METAXIN (315 aa).

At methionine 1 the chain carries N-acetylmethionine. A coiled-coil region spans residues 157 to 181; that stretch reads ENAEQREKQIYKRASEAYEALSTRL. The helical transmembrane segment at 195–215 threads the bilayer; it reads LDAFLLSHILFIIQALPVTSV. The segment at 240 to 277 is disordered; the sequence is ASSSSPSPPLHSFPSSFPRKSSKPKSKPKVEKTEEEKK. A compositionally biased stretch (basic and acidic residues) spans 267 to 277; that stretch reads PKVEKTEEEKK. The helical transmembrane segment at 284-304 threads the bilayer; that stretch reads FFLAAQFLAVVIYVSVMGGGS.

The protein belongs to the metaxin family. In terms of assembly, part of a high molecular weight complex that is distinct from the TOM complex. Interacts with a variety of mitochondrial precursor proteins. In terms of tissue distribution, expressed in roots, young cotyledons, flowers and leaves.

It localises to the mitochondrion inner membrane. The protein localises to the mitochondrion outer membrane. In terms of biological role, involved in transport of proteins into the mitochondrion. This chain is Mitochondrial outer membrane import complex protein METAXIN (MTX1), found in Arabidopsis thaliana (Mouse-ear cress).